The sequence spans 167 residues: Peptide deformylase (167 aa).

Positions 91 and 133 each coordinate Fe cation. Residue glutamate 134 is part of the active site. Fe cation is bound at residue histidine 137.

Belongs to the polypeptide deformylase family. The cofactor is Fe(2+).

The catalysed reaction is N-terminal N-formyl-L-methionyl-[peptide] + H2O = N-terminal L-methionyl-[peptide] + formate. In terms of biological role, removes the formyl group from the N-terminal Met of newly synthesized proteins. Requires at least a dipeptide for an efficient rate of reaction. N-terminal L-methionine is a prerequisite for activity but the enzyme has broad specificity at other positions. The polypeptide is Peptide deformylase (Baumannia cicadellinicola subsp. Homalodisca coagulata).